A 294-amino-acid chain; its full sequence is Transmembrane protein 178B (294 aa).

The first 23 residues, 1-23 (MAAGKLLLYAGLSLSLCALGMLA), serve as a signal peptide directing secretion. The next 3 membrane-spanning stretches (helical) occupy residues 172-192 (AGFM…GMLG), 206-226 (LLFL…VAGI), and 252-272 (MFCA…CTLA).

The protein belongs to the TMEM178 family.

It localises to the membrane. The polypeptide is Transmembrane protein 178B (tmem178b) (Danio rerio (Zebrafish)).